Reading from the N-terminus, the 187-residue chain is UPF0669 protein C6orf120 homolog (187 aa).

The first 23 residues, 1 to 23 (MVEYWKRNFFMVLVLQAFYLANC), serve as a signal peptide directing secretion. Asparagine 47 is a glycosylation site (N-linked (GlcNAc...) asparagine).

It belongs to the UPF0669 family.

Its subcellular location is the secreted. The polypeptide is UPF0669 protein C6orf120 homolog (Xenopus tropicalis (Western clawed frog)).